Consider the following 179-residue polypeptide: Large ribosomal subunit protein uL6 (179 aa).

This sequence belongs to the universal ribosomal protein uL6 family. In terms of assembly, part of the 50S ribosomal subunit.

Its function is as follows. This protein binds to the 23S rRNA, and is important in its secondary structure. It is located near the subunit interface in the base of the L7/L12 stalk, and near the tRNA binding site of the peptidyltransferase center. The protein is Large ribosomal subunit protein uL6 of Mycobacterium leprae (strain Br4923).